The chain runs to 139 residues: TDP-4-oxo-6-deoxy-alpha-D-glucose-3,4-oxoisomerase (139 aa).

The active-site Proton acceptor is the His49.

As to quaternary structure, homodimer.

It carries out the reaction dTDP-4-dehydro-6-deoxy-alpha-D-glucose = dTDP-3-dehydro-6-deoxy-alpha-D-galactose. Its function is as follows. Mediates the isomerization of dTDP-6-deoxy-D-xylohex-4-ulose into dTDP-6-deoxy-D-xylohex-3-ulose in the biosynthesis of dTDP-3-acetamido-3,6-dideoxy-alpha-D-galactose, a glycan chain of the S-layer. In Aneurinibacillus thermoaerophilus, this protein is TDP-4-oxo-6-deoxy-alpha-D-glucose-3,4-oxoisomerase (fdtA).